Consider the following 341-residue polypeptide: Uroporphyrinogen decarboxylase (341 aa).

Substrate contacts are provided by residues 26–30, Asp-75, Tyr-150, Ser-205, and His-318; that span reads RQAGR.

It belongs to the uroporphyrinogen decarboxylase family. In terms of assembly, homodimer.

Its subcellular location is the cytoplasm. It catalyses the reaction uroporphyrinogen III + 4 H(+) = coproporphyrinogen III + 4 CO2. Its pathway is porphyrin-containing compound metabolism; protoporphyrin-IX biosynthesis; coproporphyrinogen-III from 5-aminolevulinate: step 4/4. Functionally, catalyzes the decarboxylation of four acetate groups of uroporphyrinogen-III to yield coproporphyrinogen-III. This chain is Uroporphyrinogen decarboxylase, found in Thermus thermophilus (strain ATCC 27634 / DSM 579 / HB8).